The primary structure comprises 312 residues: Ceroid-lipofuscinosis neuronal protein 6 homolog (312 aa).

The span at 1–10 (MEAAARRRQH) shows a compositional bias: basic residues. A disordered region spans residues 1–22 (MEAAARRRQHPGAAGGAGAQPG). The next 7 helical transmembrane spans lie at 57–77 (WVLD…WFPL), 82–102 (VGDY…LKLI), 112–132 (SVIY…LVGD), 178–198 (GHCM…SGCF), 205–225 (SSMP…YWYL), 226–246 (VTEG…LALV), and 261–281 (LFLF…VAWL).

Interacts with CRMP2. Interacts with CLN5. Interacts with CLN5. Interacts with CLN3.

The protein resides in the endoplasmic reticulum membrane. It localises to the endoplasmic reticulum. The polypeptide is Ceroid-lipofuscinosis neuronal protein 6 homolog (CLN6) (Canis lupus familiaris (Dog)).